Consider the following 243-residue polypeptide: Triosephosphate isomerase (243 aa).

A substrate-binding site is contributed by 9-11; it reads NWK. His-96 functions as the Electrophile in the catalytic mechanism. Glu-165 (proton acceptor) is an active-site residue. Residues Gly-171, Ser-204, and 225–226 each bind substrate; that span reads GG.

It belongs to the triosephosphate isomerase family. As to quaternary structure, homodimer.

The protein localises to the cytoplasm. It carries out the reaction D-glyceraldehyde 3-phosphate = dihydroxyacetone phosphate. It participates in carbohydrate biosynthesis; gluconeogenesis. The protein operates within carbohydrate degradation; glycolysis; D-glyceraldehyde 3-phosphate from glycerone phosphate: step 1/1. Its function is as follows. Involved in the gluconeogenesis. Catalyzes stereospecifically the conversion of dihydroxyacetone phosphate (DHAP) to D-glyceraldehyde-3-phosphate (G3P). The chain is Triosephosphate isomerase from Parasynechococcus marenigrum (strain WH8102).